A 486-amino-acid chain; its full sequence is MKKLLRLFFPLSLRVRFLLATAAVVLVLSLAYGMVALIGYSVSFDKTTFRLLRGESNLFYTLAKWENNKLHVELPENIDKQSPTMTLIYDENGQLLWAQRDVPWLMKMIQPDWLKSNGFHEIEADVNDTSLLLSGDHSIQQQLQEVREDDDDAEMTHSVAVNVYPATSRMPKLTIVVVDTIPVELKSSYMVWSWFIYVLSANLLLVIPLLWVAAWWSLRPIEALAKEVRELEEHNRELLNPATTRELTSLVRNLNRLLKSERERYDKYRTTLTDLTHSLKTPLAVLQSTLRSLRSEKMSVSDAEPVMLEQISRISQQIGYYLHRASMRGGTLLSRELHPVAPLLDNLTSALNKVYQRKGVNISLDISPEISFVGEQNDFVEVMGNVLDNACKYCLEFVEISARQTDEHLYIVVEDDGPGIPLSKREVIFDRGQRVDTLRPGQGVGLAVAREITEQYEGKIVAGESMLGGARMEVIFGRQHSAPKDE.

The Cytoplasmic portion of the chain corresponds to 1–16; sequence MKKLLRLFFPLSLRVR. A helical membrane pass occupies residues 17–37; that stretch reads FLLATAAVVLVLSLAYGMVAL. Residues 38–194 lie on the Periplasmic side of the membrane; the sequence is IGYSVSFDKT…LKSSYMVWSW (157 aa). Positions 151 and 152 each coordinate a divalent metal cation. Residues 195–215 traverse the membrane as a helical segment; the sequence is FIYVLSANLLLVIPLLWVAAW. Residues 215–266 enclose the HAMP domain; it reads WWSLRPIEALAKEVRELEEHNRELLNPATTRELTSLVRNLNRLLKSERERYD. Residues 216–486 lie on the Cytoplasmic side of the membrane; sequence WSLRPIEALA…GRQHSAPKDE (271 aa). Residues 274–480 enclose the Histidine kinase domain; that stretch reads DLTHSLKTPL…RMEVIFGRQH (207 aa). A Phosphohistidine; by autocatalysis modification is found at His-277. Asn-385 provides a ligand contact to Mg(2+). Residues 385-393, 415-420, and 434-446 each bind ATP; these read NVLDNACKY, DDGPGI, and RVDTLRPGQGVGL. Gln-442 contacts Mg(2+).

In terms of assembly, homodimer; probably dimerizes via the cytoplasmic domain. Probably interacts with MgrB in the periplasm, altering its activity and that of downstream effector PhoP.

The protein localises to the cell inner membrane. It carries out the reaction ATP + protein L-histidine = ADP + protein N-phospho-L-histidine.. Its activity is regulated as follows. Acetyl-CoA acts as a non-competitive inhibitor of the PhoQ autokinase activity. Feedback inhibited by MgrB, which seems to bind PhoQ, altering its activity and that of downstream effector PhoP. In terms of biological role, member of the two-component regulatory system PhoP/PhoQ involved in adaptation to low Mg(2+) environments and the control of acid resistance genes. In low periplasmic Mg(2+), PhoQ functions as a membrane-associated protein kinase that undergoes autophosphorylation and subsequently transfers the phosphate to PhoP, resulting in the expression of PhoP-activated genes (PAG) and repression of PhoP-repressed genes (PRG). In high periplasmic Mg(2+), acts as a protein phosphatase that dephosphorylates phospho-PhoP, resulting in the repression of PAG and may lead to expression of some PRG. PhoP-regulated transcription is redox-sensitive, being activated when the periplasm becomes more reducing (deletion of dsbA/dsbB, or treatment with dithiothreitol). MgrB acts between DsbA/DsbB and PhoP/PhoQ in this pathway; the 2 periplasmic Cys residues of MgrB are required for its action on PhoQ, which then acts on PhoP. Mediates magnesium influx to the cytosol by activation of mgtA. Promotes expression of the two-component regulatory system rstA/rstB and transcription of the hemL, mgrB, nagA, slyB, vboR and yrbL genes. This Escherichia coli (strain K12) protein is Sensor protein PhoQ (phoQ).